The chain runs to 150 residues: UPF0178 protein HCH_06960 (150 aa).

Belongs to the UPF0178 family.

The protein is UPF0178 protein HCH_06960 of Hahella chejuensis (strain KCTC 2396).